Here is a 123-residue protein sequence, read N- to C-terminus: S-adenosylmethionine decarboxylase proenzyme 2 (123 aa).

Ser-65 (schiff-base intermediate with substrate; via pyruvic acid) is an active-site residue. Ser-65 is modified (pyruvic acid (Ser); by autocatalysis). The Proton acceptor; for processing activity role is filled by His-70. Catalysis depends on Cys-85, which acts as the Proton donor; for catalytic activity.

It belongs to the prokaryotic AdoMetDC family. Type 1 subfamily. In terms of assembly, heterotetramer of two alpha and two beta chains arranged as a dimer of alpha/beta heterodimers. Requires pyruvate as cofactor. Post-translationally, is synthesized initially as an inactive proenzyme. Formation of the active enzyme involves a self-maturation process in which the active site pyruvoyl group is generated from an internal serine residue via an autocatalytic post-translational modification. Two non-identical subunits are generated from the proenzyme in this reaction, and the pyruvate is formed at the N-terminus of the alpha chain, which is derived from the carboxyl end of the proenzyme. The post-translation cleavage follows an unusual pathway, termed non-hydrolytic serinolysis, in which the side chain hydroxyl group of the serine supplies its oxygen atom to form the C-terminus of the beta chain, while the remainder of the serine residue undergoes an oxidative deamination to produce ammonia and the pyruvoyl group blocking the N-terminus of the alpha chain.

The catalysed reaction is S-adenosyl-L-methionine + H(+) = S-adenosyl 3-(methylsulfanyl)propylamine + CO2. Its pathway is amine and polyamine biosynthesis; S-adenosylmethioninamine biosynthesis; S-adenosylmethioninamine from S-adenosyl-L-methionine: step 1/1. Functionally, catalyzes the decarboxylation of S-adenosylmethionine to S-adenosylmethioninamine (dcAdoMet), the propylamine donor required for the synthesis of the polyamines spermine and spermidine from the diamine putrescine. The polypeptide is S-adenosylmethionine decarboxylase proenzyme 2 (Bacillus cereus (strain ZK / E33L)).